We begin with the raw amino-acid sequence, 460 residues long: Phosphoglucomutase (460 aa).

The active-site Phosphoserine intermediate is the Ser103. Mg(2+) is bound at residue Ser103. Substrate-binding positions include 103–104 (SH) and Lys113. Mg(2+) contacts are provided by Asp239, Asp241, and Asp243. Substrate contacts are provided by residues 243 to 244 (DR), Thr303, and 322 to 324 (EMS).

Belongs to the phosphohexose mutase family. Mg(2+) is required as a cofactor.

The protein localises to the cytoplasm. It catalyses the reaction alpha-D-glucose 1-phosphate = alpha-D-glucose 6-phosphate. In terms of biological role, this enzyme participates in both the breakdown and synthesis of glucose. This is Phosphoglucomutase (pgm) from Neisseria gonorrhoeae.